A 104-amino-acid chain; its full sequence is Protein U9 (104 aa).

A helical membrane pass occupies residues 37–54 (GVQGLNADCSYVKSQCIK).

It localises to the host membrane. This chain is Protein U9 (U9), found in Human herpesvirus 6B (HHV-6 variant B).